Reading from the N-terminus, the 162-residue chain is Disulfide bond formation protein B (162 aa).

Topologically, residues 1-8 (MTPLFRKA) are cytoplasmic. Residues 9-25 (VWLLFAVSVCAFAGSLA) traverse the membrane as a helical segment. Residues 26–43 (AQYVLGMEPCVLCISQRL) are Periplasmic-facing. A disulfide bond links C35 and C38. The helical transmembrane segment at 44–60 (CVLATALCAAVVLACKP) threads the bilayer. Residues 61 to 67 (KGRVGGL) are Cytoplasmic-facing. Residues 68-85 (SGAVFISIPAVTGISVAA) traverse the membrane as a helical segment. Residues 86–141 (YQLWLQSLPPGAAPSCGAPWTFRLKGWPLFDWFEPVVRGFGNCAEPDYLLGVALPV) are Periplasmic-facing. C101 and C128 are disulfide-bonded. The chain crosses the membrane as a helical span at residues 142–160 (WSAAYFLAVVLTVWWAWAR). Residues 161-162 (AK) lie on the Cytoplasmic side of the membrane.

It belongs to the DsbB family.

Its subcellular location is the cell inner membrane. Its function is as follows. Required for disulfide bond formation in some periplasmic proteins. Acts by oxidizing the DsbA protein. The protein is Disulfide bond formation protein B of Neisseria gonorrhoeae (strain ATCC 700825 / FA 1090).